Reading from the N-terminus, the 1381-residue chain is Regulator of G-protein signaling 12 (1381 aa).

The 78-residue stretch at 21 to 98 (SVEVARGRAG…VLHMVIAEGT (78 aa)) folds into the PDZ domain. Ser-171 and Ser-194 each carry phosphoserine. A Glycyl lysine isopeptide (Lys-Gly) (interchain with G-Cter in SUMO2) cross-link involves residue Lys-195. The PID domain occupies 223 to 390 (SILNVAMVVG…VLQFISVLYR (168 aa)). Disordered stretches follow at residues 409 to 428 (ADAH…IGNF), 442 to 528 (LGGG…GAAG), and 620 to 644 (RKTK…SQRT). The span at 412 to 428 (HQNNSTSSNSDSGIGNF) shows a compositional bias: polar residues. Arg-524 and Arg-633 each carry omega-N-methylarginine. A phosphoserine mark is found at Ser-661 and Ser-671. The region spanning 715-832 (SFERLLQDPV…LKSQLYQECV (118 aa)) is the RGS domain. The interval 842–942 (PDSQQVPSSP…ESQGSVSSAG (101 aa)) is disordered. The span at 849–869 (SSPASKHSISSDHSNVSTPKK) shows a compositional bias: low complexity. A phosphoserine mark is found at Ser-850 and Ser-879. Positions 914 to 923 (DHGDHAHDAP) are enriched in basic and acidic residues. The residue at position 943 (Ser-943) is a Phosphoserine. 2 consecutive RBD domains span residues 962–1032 (KHCC…LEKR) and 1034–1104 (LFRL…LEER). Positions 1102 to 1117 (EERDPSRGKVSTDKQK) are enriched in basic and acidic residues. Residues 1102–1169 (EERDPSRGKV…RDPRLSKREE (68 aa)) form a disordered region. The segment covering 1122 to 1132 (KQNSAVNSSPR) has biased composition (polar residues). The span at 1151 to 1169 (IRGENGKSARDPRLSKREE) shows a compositional bias: basic and acidic residues. The region spanning 1187 to 1209 (AEEFFELISKAQSNRADDQRGLL) is the GoLoco domain. Disordered regions lie at residues 1227–1318 (SELA…QEGT) and 1347–1381 (LMGE…TSRF). Positions 1261 to 1280 (SDSPATSPASAQSPCSAYSP) are enriched in low complexity. Residues 1361 to 1381 (LPPPPTPQDTPGPPRPGTSRF) are compositionally biased toward pro residues.

In terms of assembly, interacts with GNAI1, GNAI2 and GNAI3; the interactions are GDP-dependent. In terms of tissue distribution, expressed in brain.

It localises to the nucleus. The protein resides in the cytoplasm. It is found in the cell projection. The protein localises to the dendrite. Its subcellular location is the synapse. In terms of biological role, regulates G protein-coupled receptor signaling cascades. Inhibits signal transduction by increasing the GTPase activity of G protein alpha subunits, thereby driving them into their inactive GDP-bound form. The sequence is that of Regulator of G-protein signaling 12 (Rgs12) from Mus musculus (Mouse).